A 778-amino-acid polypeptide reads, in one-letter code: Probable potassium transporter 13 (778 aa).

At Met1 to Leu28 the chain is on the cytoplasmic side. Residues Leu29–Val49 traverse the membrane as a helical segment. Topologically, residues Tyr50–Ser72 are extracellular. A helical transmembrane segment spans residues Leu73 to Ala93. Residues Asp94–Arg156 lie on the Cytoplasmic side of the membrane. A helical membrane pass occupies residues Val157 to Thr177. The Extracellular portion of the chain corresponds to Pro178–Asn199. An N-linked (GlcNAc...) asparagine glycan is attached at Asn199. A helical transmembrane segment spans residues Tyr200–Thr220. The Cytoplasmic portion of the chain corresponds to Arg221–Arg222. Residues Val223–Ile243 traverse the membrane as a helical segment. Residues Tyr244 to Ser276 lie on the Extracellular side of the membrane. Residues Leu277–Phe297 traverse the membrane as a helical segment. The Cytoplasmic segment spans residues Ser298 to Arg303. The helical transmembrane segment at Leu304–Tyr324 threads the bilayer. At Leu325–Arg343 the chain is on the extracellular side. The chain crosses the membrane as a helical span at residues Val344 to Ile364. Residues Ser365–Gln395 lie on the Cytoplasmic side of the membrane. Residues Ile396–Phe416 form a helical membrane-spanning segment. Over Arg417–Asn424 the chain is Extracellular. The chain crosses the membrane as a helical span at residues Ala425–Ile445. At Thr446 to Arg451 the chain is on the cytoplasmic side. A helical transmembrane segment spans residues Trp452–Ser472. At Ala473–Lys477 the chain is on the extracellular side. The helical transmembrane segment at Val478 to Thr498 threads the bilayer. Residues Trp499 to Val778 are Cytoplasmic-facing. The segment covering Pro655–Cys677 has biased composition (polar residues). The tract at residues Pro655–Glu704 is disordered.

This sequence belongs to the HAK/KUP transporter (TC 2.A.72.3) family.

The protein resides in the membrane. In terms of biological role, high-affinity potassium transporter. The sequence is that of Probable potassium transporter 13 (HAK13) from Oryza sativa subsp. japonica (Rice).